Reading from the N-terminus, the 1132-residue chain is MPEPSKAAPKKEAKKKEEKKEEKKEAPPPQEHKDEAPDDVHPPETPDPEGLFLSKPQNVMVESGRDVTVSARVAGAALPCAPAVKWFKGKWAELGDKSARCRLRHSVDDDKVHTFELTITKVAMGDRGDYRCEVTAKEQKDSCSFSIDVEAPRSSEGNVLQAFKRTGEGKDDTAGELDFSGLLKKREVQVEEKKKKKDEDDQFPPEIWELLKGVTKKSEYERIAFQYGITDLRGMLKRLKKVHVEPKKSEAFIRKLDPAYQVDKGNKIKLVVELSDPDLPLKWYKNGQLLKPSTKYVFENVGLKRILTIHKCSLADDAAYECRVNDEKCFTEVFVKEPPVTVVRGLEDQQVVVGDRVVLEAEVSEEGAQVMWLKDGVDVTRDDAFKYRFKKDGKKHFLIINEAELSDSAHYKIMTNGGESEAELSVEEKQLEVLQDMADLTVKASEQAVFKCEVSDEKVTGRWFRNGVEVKPSKRIHISHNGRFHKLVIDDVRPEDEGDYTFIPDGYALSLSAKLNFLEIKVEYVPKQEPPKIHLDCSGKAAENTIVVVAGNKVRLDVPISGEPAPTVTWKRGDQLFTATEGRVHIDSQADLSSFVIESAERSDEGRYCITVTNPVGEDSATLHVRVVDVPDPPQSVRVTSVGEDWAVLSWEAPPFDGGMPITGYLMERKKKGSMRWMKLNFEVFPDTTYESTKMIEGVFYEMRVFAVNAIGVSQPSLNTQPFMPIAPTSEPTHVVLEDVTDTTATIKWRPPERIGAGGVDGYLVEWCREGSNEWVAANTELVERCGLTARGLPTGERLLFRVISVNMAGKSPPATMAQPVTIREIVERPKIRLPRHLRQTYIRRVGEQVNLVIPFQGKPRPQVTWSREGGALPAEVQTRTSDVDSVFFIRSAARPLSGNYEMRVRIDNMEDCATLRLRVVERPGPPQAVRVMEVWGSNALLQWEPPKDDGNAEISGYTVQKADTRTMEWFTVLEHSRPTRCTVSELVMGNEYRFRVYSENVCGTSQEPATSHNTARIAKEGLTLKMVPYKERDLRAAPQFLTPLVDRSVVAGYTVTLNCAVRGHPKPKVTWLKNSVEIGADPKFLSRHGLGVLSLLIRRPGPFDGGTYGCRAVNEMGEATTECRLDVRVPQ.

The interval 1 to 59 is disordered; sequence MPEPSKAAPKKEAKKKEEKKEEKKEAPPPQEHKDEAPDDVHPPETPDPEGLFLSKPQNV. The segment covering 9 to 44 has biased composition (basic and acidic residues); it reads PKKEAKKKEEKKEEKKEAPPPQEHKDEAPDDVHPPE. Ig-like C2-type domains are found at residues 48–149, 249–338, 339–429, 430–530, and 531–630; these read PEGL…SIDV, SEAF…VKEP, PVTV…VEEK, QLEV…KQEP, and PKIH…VVDV. Fibronectin type-III domains follow at residues 633–729 and 731–826; these read PPQS…IAPT and EPTH…IREI. The 94-residue stretch at 830 to 923 folds into the Ig-like C2-type 6 domain; sequence PKIRLPRHLR…ATLRLRVVER (94 aa). A Fibronectin type-III 3 domain is found at 926 to 1022; sequence PPQAVRVMEV…HNTARIAKEG (97 aa). Residues 1039 to 1132 form the Ig-like C2-type 7 domain; it reads PQFLTPLVDR…ECRLDVRVPQ (94 aa).

It belongs to the immunoglobulin superfamily. MyBP family.

Its function is as follows. Thick filament-associated protein located in the crossbridge region of vertebrate striated muscle a bands. In vitro it binds MHC, F-actin and native thin filaments, and modifies the activity of actin-activated myosin ATPase. It may modulate muscle contraction or may play a more structural role. The polypeptide is Myosin-binding protein C, fast-type (MYBPC2) (Gallus gallus (Chicken)).